Consider the following 589-residue polypeptide: Aspartate--tRNA(Asp/Asn) ligase (589 aa).

Residue Glu-175 participates in L-aspartate binding. The tract at residues 199–202 is aspartate; that stretch reads QQLK. Arg-221 is a binding site for L-aspartate. Residues 221–223 and Gln-230 contribute to the ATP site; that span reads RDE. His-451 serves as a coordination point for L-aspartate. Glu-485 provides a ligand contact to ATP. Arg-492 is an L-aspartate binding site. Position 537 to 540 (537 to 540) interacts with ATP; the sequence is GIDR.

The protein belongs to the class-II aminoacyl-tRNA synthetase family. Type 1 subfamily. Homodimer.

It is found in the cytoplasm. The enzyme catalyses tRNA(Asx) + L-aspartate + ATP = L-aspartyl-tRNA(Asx) + AMP + diphosphate. Functionally, aspartyl-tRNA synthetase with relaxed tRNA specificity since it is able to aspartylate not only its cognate tRNA(Asp) but also tRNA(Asn). Reaction proceeds in two steps: L-aspartate is first activated by ATP to form Asp-AMP and then transferred to the acceptor end of tRNA(Asp/Asn). The chain is Aspartate--tRNA(Asp/Asn) ligase from Roseiflexus sp. (strain RS-1).